The sequence spans 516 residues: Flavin-dependent halogenase armH2 (516 aa).

Residues glycine 16, alanine 19, and glutamate 49 each coordinate FAD. Positions 328 and 329 each coordinate chloride. Isoleucine 330 is an FAD binding site. Residues 440–475 (PQANGNGAAKQDAVPAPIPVALSSGAGPEKDAKRRE) form a disordered region.

Belongs to the flavin-dependent halogenase family.

The catalysed reaction is melleolide F + FADH2 + chloride + O2 = 6'-chloromelleolide F + FAD + 2 H2O + H(+). Functionally, flavin-dependent halogenase involved in the biosynthesis of melleolides, a range of antifungal and phytotoxic polyketide derivatives composed of an orsellinic acid (OA) moiety esterified to various sesquiterpene alcohols. The halogenase catalyzes the transfer of a single chlorine atom to the melleolide backbone, resulting in a 6'-chloromelleolide product. The enzyme acts on free substrate and does not depend on carrier-protein-dependent acceptor molecules. This Armillaria mellea (Honey mushroom) protein is Flavin-dependent halogenase armH2.